The following is a 356-amino-acid chain: Probable methyltransferase-like protein 15 homolog (356 aa).

S-adenosyl-L-methionine-binding positions include 55 to 57 (GGH), Asp74, Phe103, Asp126, and Gln133.

The protein belongs to the methyltransferase superfamily. RsmH family.

In terms of biological role, probable S-adenosyl-L-methionine-dependent methyltransferase. In Drosophila melanogaster (Fruit fly), this protein is Probable methyltransferase-like protein 15 homolog.